The sequence spans 505 residues: ATP synthase subunit alpha (505 aa).

171 to 178 serves as a coordination point for ATP; that stretch reads GDRQTGKT.

Belongs to the ATPase alpha/beta chains family. In terms of assembly, F-type ATPases have 2 components, CF(1) - the catalytic core - and CF(0) - the membrane proton channel. CF(1) has five subunits: alpha(3), beta(3), gamma(1), delta(1), epsilon(1). CF(0) has three main subunits: a(1), b(2) and c(9-12). The alpha and beta chains form an alternating ring which encloses part of the gamma chain. CF(1) is attached to CF(0) by a central stalk formed by the gamma and epsilon chains, while a peripheral stalk is formed by the delta and b chains.

It localises to the cell inner membrane. The catalysed reaction is ATP + H2O + 4 H(+)(in) = ADP + phosphate + 5 H(+)(out). Its function is as follows. Produces ATP from ADP in the presence of a proton gradient across the membrane. The alpha chain is a regulatory subunit. The sequence is that of ATP synthase subunit alpha from Campylobacter concisus (strain 13826).